The chain runs to 131 residues: Arsenate reductase 2 (131 aa).

Catalysis depends on nucleophile residues Cys-10, Cys-82, and Cys-89. 2 disulfides stabilise this stretch: Cys-10-Cys-82 and Cys-82-Cys-89.

This sequence belongs to the low molecular weight phosphotyrosine protein phosphatase family. Thioredoxin-coupled ArsC subfamily.

Its subcellular location is the cytoplasm. The enzyme catalyses arsenate + [thioredoxin]-dithiol + H(+) = arsenite + [thioredoxin]-disulfide + H2O. Catalyzes the reduction of arsenate [As(V)] to arsenite [As(III)]. This chain is Arsenate reductase 2, found in Staphylococcus haemolyticus (strain JCSC1435).